A 238-amino-acid chain; its full sequence is Large ribosomal subunit protein uL2 (238 aa).

Positions 1 to 11 (MGKRLISQNRG) are enriched in polar residues. Disordered stretches follow at residues 1-22 (MGKR…APSH) and 202-223 (FGGG…APPG).

It belongs to the universal ribosomal protein uL2 family. As to quaternary structure, part of the 50S ribosomal subunit. Forms a bridge to the 30S subunit in the 70S ribosome.

Its function is as follows. One of the primary rRNA binding proteins. Required for association of the 30S and 50S subunits to form the 70S ribosome, for tRNA binding and peptide bond formation. It has been suggested to have peptidyltransferase activity; this is somewhat controversial. Makes several contacts with the 16S rRNA in the 70S ribosome. The sequence is that of Large ribosomal subunit protein uL2 from Methanosarcina mazei (strain ATCC BAA-159 / DSM 3647 / Goe1 / Go1 / JCM 11833 / OCM 88) (Methanosarcina frisia).